Reading from the N-terminus, the 64-residue chain is Large ribosomal subunit protein bL32 (64 aa).

The disordered stretch occupies residues 1 to 64; sequence MAVQQNRKTR…APKHGDETEE (64 aa). A compositionally biased stretch (basic residues) spans 7-16; the sequence is RKTRSKRGMR.

It belongs to the bacterial ribosomal protein bL32 family.

This Methylococcus capsulatus (strain ATCC 33009 / NCIMB 11132 / Bath) protein is Large ribosomal subunit protein bL32.